Consider the following 132-residue polypeptide: Small ribosomal subunit protein eS24 (132 aa).

A compositionally biased stretch (basic and acidic residues) spans 92–101 (LARHGLYEKK). Positions 92–132 (LARHGLYEKKRPTRKQRKERKNRMKKVRGTKKSKVGAAAKK) are disordered. Residues 102–132 (RPTRKQRKERKNRMKKVRGTKKSKVGAAAKK) are compositionally biased toward basic residues.

Belongs to the eukaryotic ribosomal protein eS24 family.

The chain is Small ribosomal subunit protein eS24 (RpS24) from Spodoptera frugiperda (Fall armyworm).